A 340-amino-acid polypeptide reads, in one-letter code: Major histocompatibility complex class I-related protein 1 (340 aa).

A signal peptide spans 1 to 22; the sequence is MGELTAFLLPLIIVLMVKHSNS. The alpha-1 stretch occupies residues 23–109; that stretch reads RTHSLRYFRL…KRLQRHYNHS (87 aa). The segment at 23–201 is antigen-binding cleft; sequence RTHSLRYFRL…EYGKDTLQRT (179 aa). Residues 23–302 lie on the Extracellular side of the membrane; it reads RTHSLRYFRL…QESEAIPLVM (280 aa). 8-(9H-purin-6-yl)-2-oxa-8-azabicyclo[3.3.1]nona-3,6-diene-4,6-dicarbaldehyde contacts are provided by tyrosine 29 and arginine 31. 5-(2-oxoethylideneamino)-6-(D-ribitylamino)uracil is bound by residues arginine 31, serine 46, and lysine 65. Residues arginine 31, serine 46, and lysine 65 each contribute to the 5-(2-oxopropylideneamino)-6-(D-ribitylamino)uracil site. 3 residues coordinate 7-hydroxy-6-methyl-8-(1-D-ribityl)lumazine: arginine 31, serine 46, and lysine 65. 8-(9H-purin-6-yl)-2-oxa-8-azabicyclo[3.3.1]nona-3,6-diene-4,6-dicarbaldehyde-binding residues include lysine 65 and histidine 80. Lysine 65 is a binding site for 2-amino-4-oxopteridine-6-carbaldehyde. Lysine 65 serves as a coordination point for pyridoxal. A glycan (N-linked (GlcNAc...) asparagine) is linked at asparagine 107. Residues 110–201 are alpha-2; the sequence is GSHTYQRMIG…EYGKDTLQRT (92 aa). An 8-(9H-purin-6-yl)-2-oxa-8-azabicyclo[3.3.1]nona-3,6-diene-4,6-dicarbaldehyde-binding site is contributed by arginine 116. Residues arginine 116, tyrosine 174, and glutamine 175 each contribute to the 5-(2-oxoethylideneamino)-6-(D-ribitylamino)uracil site. 5-(2-oxopropylideneamino)-6-(D-ribitylamino)uracil is bound by residues arginine 116, tyrosine 174, and glutamine 175. Arginine 116, tyrosine 174, and glutamine 175 together coordinate 7-hydroxy-6-methyl-8-(1-D-ribityl)lumazine. 2 cysteine pairs are disulfide-bonded: cysteine 120-cysteine 183 and cysteine 222-cysteine 278. An alpha-3 region spans residues 202 to 293; that stretch reads EPPLVRVNRK…GVHVVLQVPQ (92 aa). In terms of domain architecture, Ig-like C1-type spans 203–282; sequence PPLVRVNRKE…SNLYSCHVEH (80 aa). Positions 294–302 are connecting peptide; it reads ESEAIPLVM. A helical transmembrane segment spans residues 303–323; sequence KAVSGSIVFVIVLAGVGVLVW. The Cytoplasmic portion of the chain corresponds to 324–340; the sequence is RRRPREQNGAVYLPTPD.

Belongs to the MHC class I family. Heterotrimer that consists of MR1, B2M and metabolite antigen. Major classes of metabolite ligands presented by MR1 include riboflavin-related antigens, pyrimidines and ribityl lumazines, nucleobase adducts and folate derivatives. Forms reversible covalent Schiff base complexes with microbial pyrimidine-based metabolite, which serves as a molecular switch triggering complete folding, stable association with B2M and translocation of the ternary complex from endoplasmic reticulum to the plasma membrane. Alternatively, forms non-Schiff base complexes with ribityl lumazines. On antigen-presenting cells, the ternary complex interacts with TCR on MR1-restricted T cells. Interacts with TAPBP and TAPBPL chaperones in the endoplasmic reticulum. TAPBP associated or not with MHC class I peptide loading complex binds ligand-free MR1 or MR1-B2M complex, providing for stable MR1 pools ready for metabolite antigen processing. TAPBPL interacts with MR1 in a ligand-independent way; this interaction may stabilize MR1 pool and facilitate ligand loading and dissociation. Structurally, MR1-B2M heterodimer adopts a topology similar to classical MHC class I molecules, with alpha-1 and alpha-2 domains of MR1 forming the antigen-binding cleft composed of two alpha-helices resting on a floor of 7-stranded anti-parallel beta-pleated sheet. MR1-B2M heterodimer (via alpha-helices) interacts with TCR (via CDR domains). N-glycosylated.

It is found in the cell membrane. It localises to the endoplasmic reticulum membrane. Its subcellular location is the golgi apparatus membrane. The protein resides in the early endosome membrane. The protein localises to the late endosome membrane. Functionally, antigen-presenting molecule specialized in displaying microbial pyrimidine-based metabolites to alpha-beta T cell receptors (TCR) on innate-type mucosal-associated invariant T (MAIT) cells. In complex with B2M preferentially presents riboflavin-derived metabolites to semi-invariant TCRs on MAIT cells, guiding immune surveillance of the microbial metabolome at mucosal epithelial barriers. Signature pyrimidine-based microbial antigens are generated via non-enzymatic condensation of metabolite intermediates of the riboflavin pathway with by-products arising from other metabolic pathways such as glycolysis. Typical potent antigenic metabolites are 5-(2-oxoethylideneamino)-6-D-ribitylaminouracil (5-OE-RU) and 5-(2-oxopropylideneamino)-6-D-ribitylaminouracil (5-OP-RU), products of condensation of 5-amino-6-D-ribityaminouracil (5-A-RU) with glyoxal or methylglyoxal by-products, respectively. May present microbial antigens to various MAIT cell subsets, providing for unique recognition of diverse microbes, including pathogens that do not synthesize riboflavin. Upon antigen recognition, elicits rapid innate-type MAIT cell activation to eliminate pathogenic microbes by directly killing infected cells. During T cell development, drives thymic selection and post-thymic terminal differentiation of MAIT cells in a process dependent on commensal microflora. Acts as an immune sensor of cancer cell metabolome. May present a tumor-specific or -associated metabolite essential for cancer cell survival to a pan-cancer TCR on a non-MAIT CD8-positive T cell clone, triggering T cell-mediated killing of a wide range of cancer cell types. May present tumor-enriched pyridoxal and pyridoxal 5'-phosphate antigens, enabling preferential recognition of cancer cells. Presents nucleobase carbonyl adducts generated during oxidative stress. Captures M3Ade, a nucleobase adduct composed of one adenine modified by a malondialdehyde trimer, for recognition by MR1-restricted T cell clones expressing a polyclonal TCR repertoire. In Pongo abelii (Sumatran orangutan), this protein is Major histocompatibility complex class I-related protein 1.